Here is a 77-residue protein sequence, read N- to C-terminus: Defensin-B6 (77 aa).

An N-terminal signal peptide occupies residues 1–20 (MKTLFFLSVFIFLLLHLSPG). Disulfide bonds link Cys43–Cys70, Cys50–Cys64, and Cys54–Cys71.

Belongs to the beta-defensin family. Lowly expressed in spleen, kidney and lung.

The protein resides in the secreted. Functionally, has antimicrobial activity. This Ornithorhynchus anatinus (Duckbill platypus) protein is Defensin-B6.